The primary structure comprises 349 residues: DNA polymerase IV (349 aa).

In terms of domain architecture, UmuC spans 3 to 187; it reads VLFVDFDYFF…LDISKVPGVG (185 aa). Mg(2+) is bound by residues Asp-7 and Asp-105. Glu-106 is a catalytic residue.

It belongs to the DNA polymerase type-Y family. As to quaternary structure, monomer. The cofactor is Mg(2+).

It localises to the cytoplasm. The enzyme catalyses DNA(n) + a 2'-deoxyribonucleoside 5'-triphosphate = DNA(n+1) + diphosphate. Its function is as follows. Poorly processive, error-prone DNA polymerase involved in untargeted mutagenesis. Copies undamaged DNA at stalled replication forks, which arise in vivo from mismatched or misaligned primer ends. These misaligned primers can be extended by PolIV. Exhibits no 3'-5' exonuclease (proofreading) activity. May be involved in translesional synthesis. This chain is DNA polymerase IV, found in Metallosphaera sedula (strain ATCC 51363 / DSM 5348 / JCM 9185 / NBRC 15509 / TH2).